A 211-amino-acid chain; its full sequence is SOSS complex subunit B1 (211 aa).

The segment at residues 22–92 (IVLETGRVTK…TLYTGRGGDL (71 aa)) is a DNA-binding region (OB). Positions 110 to 211 (EPNPEYSAQQ…GKETRRSSKR (102 aa)) are disordered. The segment covering 115-128 (YSAQQAPNKTVQND) has biased composition (polar residues). Composition is skewed to pro residues over residues 133–143 (APQPPTGPPAT) and 165–174 (PHPPHTPSHP).

It belongs to the SOSS-B family. SOSS-B1 subfamily. In terms of assembly, component of the SOSS complex, composed of SOSS-B (SOSS-B1/NABP2 or SOSS-B2/NABP1), SOSS-A/INTS3 and SOSS-C/INIP. SOSS complexes containing SOSS-B1/NABP2 are more abundant than complexes containing SOSS-B2/NABP1. Directly interacts with ATM, SOSS-A/INTS3 and RAD51. Interacts with INTS7. In terms of processing, phosphorylated by ATM in response to DNA damage. Phosphorylation prevents degradation by the proteasome, hence stabilization of the protein and accumulation within cells. Post-translationally, ubiquitinated in a FBXL5-dependent manner, leading to proteasomal degradation.

The protein localises to the nucleus. Component of the SOSS complex, a multiprotein complex that functions downstream of the MRN complex to promote DNA repair and G2/M checkpoint. In the SOSS complex, acts as a sensor of single-stranded DNA that binds to single-stranded DNA, in particular to polypyrimidines. The SOSS complex associates with DNA lesions and influences diverse endpoints in the cellular DNA damage response including cell-cycle checkpoint activation, recombinational repair and maintenance of genomic stability. Required for efficient homologous recombination-dependent repair of double-strand breaks (DSBs) and ATM-dependent signaling pathways. This Bos taurus (Bovine) protein is SOSS complex subunit B1 (NABP2).